A 408-amino-acid chain; its full sequence is Argininosuccinate synthase (408 aa).

ATP-binding positions include 12–20 and A39; that span reads AYSGGLDTS. Positions 92 and 97 each coordinate L-citrulline. Position 122 (G122) interacts with ATP. L-aspartate contacts are provided by T124, N128, and D129. An L-citrulline-binding site is contributed by N128. Residues R132, S183, S192, E268, and Y280 each coordinate L-citrulline.

This sequence belongs to the argininosuccinate synthase family. Type 1 subfamily. Homotetramer.

The protein localises to the cytoplasm. It carries out the reaction L-citrulline + L-aspartate + ATP = 2-(N(omega)-L-arginino)succinate + AMP + diphosphate + H(+). It participates in amino-acid biosynthesis; L-arginine biosynthesis; L-arginine from L-ornithine and carbamoyl phosphate: step 2/3. The chain is Argininosuccinate synthase from Caulobacter vibrioides (strain ATCC 19089 / CIP 103742 / CB 15) (Caulobacter crescentus).